Consider the following 341-residue polypeptide: uncharacterized protein (341 aa).

10 consecutive transmembrane segments (helical) span residues 10–30 (ALGVVLLLFVVFLWLISSFLT), 42–62 (PFLITYINTGTFVFYLIPWYF), 107–127 (LGFCIIWFAANYFSNSSLGFT), 129–149 (VASFTIISSMSGFFTLGLGTI), 155–175 (FTLSKLLALMASVGGVIIVVT), 192–212 (ALGNAYALLAALLYGCYSVMV), 226–246 (LFFGLVGLFDLILLWPFLIIL), 263–283 (LIVLIINASITFVSDYLWVIA), 290–310 (LLVTVGMSLSIPLALFFDILL), and 313–333 (HYLNFSLILGSLLVFAGFIVV).

The protein belongs to the TPT transporter family.

Its subcellular location is the vacuole membrane. The protein resides in the golgi apparatus membrane. This is an uncharacterized protein from Schizosaccharomyces pombe (strain 972 / ATCC 24843) (Fission yeast).